The sequence spans 503 residues: 3-octaprenyl-4-hydroxybenzoate carboxy-lyase (503 aa).

Asn-176 serves as a coordination point for Mn(2+). Prenylated FMN-binding positions include 179 to 181 (IYR), 193 to 195 (RWL), and 198 to 199 (RG). Glu-242 lines the Mn(2+) pocket. Asp-303 serves as the catalytic Proton donor.

Belongs to the UbiD family. Homohexamer. Prenylated FMN is required as a cofactor. The cofactor is Mn(2+).

The protein localises to the cell membrane. It carries out the reaction a 4-hydroxy-3-(all-trans-polyprenyl)benzoate + H(+) = a 2-(all-trans-polyprenyl)phenol + CO2. It participates in cofactor biosynthesis; ubiquinone biosynthesis. Catalyzes the decarboxylation of 3-octaprenyl-4-hydroxy benzoate to 2-octaprenylphenol, an intermediate step in ubiquinone biosynthesis. This chain is 3-octaprenyl-4-hydroxybenzoate carboxy-lyase, found in Ralstonia nicotianae (strain ATCC BAA-1114 / GMI1000) (Ralstonia solanacearum).